Reading from the N-terminus, the 545-residue chain is 2-succinyl-5-enolpyruvyl-6-hydroxy-3-cyclohexene-1-carboxylate synthase (545 aa).

Polar residues predominate over residues 170–185 (QVSGLQRSAPAPSSDS). Positions 170-193 (QVSGLQRSAPAPSSDSPLGAAPQL) are disordered.

Belongs to the TPP enzyme family. MenD subfamily. As to quaternary structure, homodimer. The cofactor is Mg(2+). It depends on Mn(2+) as a cofactor. Requires thiamine diphosphate as cofactor.

It catalyses the reaction isochorismate + 2-oxoglutarate + H(+) = 5-enolpyruvoyl-6-hydroxy-2-succinyl-cyclohex-3-ene-1-carboxylate + CO2. It participates in quinol/quinone metabolism; 1,4-dihydroxy-2-naphthoate biosynthesis; 1,4-dihydroxy-2-naphthoate from chorismate: step 2/7. It functions in the pathway cofactor biosynthesis; phylloquinone biosynthesis. Catalyzes the thiamine diphosphate-dependent decarboxylation of 2-oxoglutarate and the subsequent addition of the resulting succinic semialdehyde-thiamine pyrophosphate anion to isochorismate to yield 2-succinyl-5-enolpyruvyl-6-hydroxy-3-cyclohexene-1-carboxylate (SEPHCHC). This chain is 2-succinyl-5-enolpyruvyl-6-hydroxy-3-cyclohexene-1-carboxylate synthase, found in Parasynechococcus marenigrum (strain WH8102).